The primary structure comprises 189 residues: Elongation factor P (189 aa).

This sequence belongs to the elongation factor P family.

The protein resides in the cytoplasm. The protein operates within protein biosynthesis; polypeptide chain elongation. Its function is as follows. Involved in peptide bond synthesis. Stimulates efficient translation and peptide-bond synthesis on native or reconstituted 70S ribosomes in vitro. Probably functions indirectly by altering the affinity of the ribosome for aminoacyl-tRNA, thus increasing their reactivity as acceptors for peptidyl transferase. This Rhizobium rhizogenes (strain K84 / ATCC BAA-868) (Agrobacterium radiobacter) protein is Elongation factor P.